The following is a 73-amino-acid chain: Gas vesicle protein M2 (73 aa).

The protein belongs to the gas vesicle GvpA family. GvpF to GvpM interact with each other in vitro, and may form multi-subunit complex(es). Might interact with GvpA.

Its subcellular location is the gas vesicle. In terms of biological role, proteins GvpF to GvpM might be involved in nucleating gas vesicle formation. A minor component of the gas vesicle. Gas vesicles are hollow, gas filled proteinaceous nanostructures found in several microbial planktonic microorganisms. They allow positioning of halobacteria at the optimal depth for growth in the poorly aerated, shallow brine pools of their habitat. Expression of 2 c-vac DNA fragments containing 2 divergently transcribed regions (gvpE-gvpF-gvpG-gvpH-gvpI-gvpJ-gvpK-gvpL-gvpM and gvpA-gvpC-gvpN-gvpO) allows H.volcanii to produce gas vesicles. This is Gas vesicle protein M2 from Halobacterium salinarum (strain ATCC 700922 / JCM 11081 / NRC-1) (Halobacterium halobium).